The chain runs to 578 residues: E3 ubiquitin-protein ligase hrd-like protein 1 (578 aa).

Residues 32–52 (GYLALSLCVAFIASASVFTHF) form a helical membrane-spanning segment. Asparagine 68 is a glycosylation site (N-linked (GlcNAc...) asparagine). Helical transmembrane passes span 76–96 (FGIN…HYIL), 101–121 (LIWV…KLII), 134–154 (VAAR…LSVV), 163–183 (VMPW…QFVT), 202–222 (SFIS…VSRF), 230–250 (PAVL…YILF), and 286–306 (FLSY…SIFF). The RING-type; atypical zinc finger occupies 350–388 (CIVCWELLGTSRRLPCSHQFHDWCLMWWLAQDSSCPTCR). The CUE domain maps to 447-489 (QLQSMLETVLEMFPQMSPETILADLRQSGSAQSTIENILEGRM). Asparagine 492 carries N-linked (GlcNAc...) asparagine glycosylation.

The protein resides in the membrane. Its function is as follows. Proposed to have a role in neuroprotection. The chain is E3 ubiquitin-protein ligase hrd-like protein 1 from Caenorhabditis briggsae.